The sequence spans 126 residues: MSAYRQPVERYWWARRRSYLRFMLREISCIFVAWFVLYLMLVLRAVGAGGNSYQRFLDFSANPVVVVLNVVALSFLLLHAVTWFGSAPRAMVIQVRGRRVPARAVLAGHYAAWLVVSVIVAWMVLS.

The next 3 helical transmembrane spans lie at 30-50, 64-84, and 105-125; these read IFVA…GAGG, VVVV…VTWF, and VLAG…WMVL.

This sequence belongs to the FrdC family. As to quaternary structure, part of an enzyme complex containing four subunits: a flavoprotein (FrdA), an iron-sulfur protein (FrdB), and two hydrophobic anchor proteins (FrdC and FrdD).

The protein localises to the cell membrane. Its function is as follows. Anchors the catalytic components of the fumarate reductase complex to the cell membrane, binds quinones. The protein is Fumarate reductase subunit C of Mycobacterium tuberculosis (strain ATCC 25177 / H37Ra).